The primary structure comprises 147 residues: Small ribosomal subunit protein bS6 (147 aa).

Residues 96 to 147 (VTEPSPMMKAKEERFTKRDDREERSDRSEAPRAEAPAKAEAPAKAEDEAAAE) are disordered. The segment covering 104 to 147 (KAKEERFTKRDDREERSDRSEAPRAEAPAKAEAPAKAEDEAAAE) has biased composition (basic and acidic residues).

The protein belongs to the bacterial ribosomal protein bS6 family.

Binds together with bS18 to 16S ribosomal RNA. This chain is Small ribosomal subunit protein bS6, found in Photobacterium profundum (strain SS9).